A 70-amino-acid chain; its full sequence is DNA-directed RNA polymerase subunit epsilon (70 aa).

The protein belongs to the RNA polymerase subunit epsilon family. RNAP is composed of a core of 2 alpha, a beta and a beta' subunit. The core is associated with a delta subunit, and at least one of epsilon or omega. When a sigma factor is associated with the core the holoenzyme is formed, which can initiate transcription.

It carries out the reaction RNA(n) + a ribonucleoside 5'-triphosphate = RNA(n+1) + diphosphate. Its function is as follows. A non-essential component of RNA polymerase (RNAP). In Bacillus cereus (strain Q1), this protein is DNA-directed RNA polymerase subunit epsilon.